The sequence spans 194 residues: Orotate phosphoribosyltransferase (194 aa).

5-phospho-alpha-D-ribose 1-diphosphate-binding positions include Lys98 and 122-130; that span reads EDVLTTGGS. Positions 126 and 154 each coordinate orotate.

This sequence belongs to the purine/pyrimidine phosphoribosyltransferase family. PyrE subfamily. As to quaternary structure, homodimer. The cofactor is Mg(2+).

The catalysed reaction is orotidine 5'-phosphate + diphosphate = orotate + 5-phospho-alpha-D-ribose 1-diphosphate. It participates in pyrimidine metabolism; UMP biosynthesis via de novo pathway; UMP from orotate: step 1/2. Catalyzes the transfer of a ribosyl phosphate group from 5-phosphoribose 1-diphosphate to orotate, leading to the formation of orotidine monophosphate (OMP). The sequence is that of Orotate phosphoribosyltransferase from Deinococcus radiodurans (strain ATCC 13939 / DSM 20539 / JCM 16871 / CCUG 27074 / LMG 4051 / NBRC 15346 / NCIMB 9279 / VKM B-1422 / R1).